Here is a 148-residue protein sequence, read N- to C-terminus: Prefoldin subunit alpha (148 aa).

Belongs to the prefoldin subunit alpha family. In terms of assembly, heterohexamer of two alpha and four beta subunits.

It is found in the cytoplasm. Functionally, molecular chaperone capable of stabilizing a range of proteins. Seems to fulfill an ATP-independent, HSP70-like function in archaeal de novo protein folding. The chain is Prefoldin subunit alpha (pfdA) from Pyrococcus horikoshii (strain ATCC 700860 / DSM 12428 / JCM 9974 / NBRC 100139 / OT-3).